Reading from the N-terminus, the 817-residue chain is Protein hunchback (817 aa).

Disordered regions lie at residues 51–77 (PGTINPHHQHPQQHSSMMASQPQHSPL), 93–132 (HNGGGAHHLQFSDNSGAMTPSPNTNVGGQDFGFESNTSSA), and 187–252 (YSQQ…EDQD). Low complexity predominate over residues 62-76 (QQHSSMMASQPQHSP). Over residues 103–119 (FSDNSGAMTPSPNTNVG) the composition is skewed to polar residues. Over residues 189 to 201 (QQQQQQQQRQLQQ) the composition is skewed to low complexity. 4 consecutive C2H2-type zinc fingers follow at residues 287 to 309 (HKCKSCGMVAITKMAFWEHARTH), 316 to 338 (LQCPKCPFVTELKHHLEYHIRKH), 344 to 366 (FQCDKCSYSCVNKSMLNSHRKSH), and 372 to 396 (YRCADCDYATKYCHSFKLHLRKYEH). 4 disordered regions span residues 456 to 477 (PLQQQQQPQQPASPAKSSSSVA), 491 to 513 (QNLAQQQQQQQQSPGAQSHSSQQ), 564 to 619 (QLQQ…QQTP), and 666 to 758 (APTS…AGNS). The span at 564–576 (QLQQQQQNKQANE) shows a compositional bias: low complexity. A compositionally biased stretch (acidic residues) spans 577 to 595 (NGEEDEEDNDEVDEDEEEF). Residues 680–694 (MPPTTSSPIHPSQVN) are compositionally biased toward polar residues. Low complexity predominate over residues 721 to 758 (PTTANTSASSTASSSGNSSNSSSTSTSSNSNSSSAGNS). 2 C2H2-type zinc fingers span residues 764–786 (YECKYCDIFFKDAVLYTIHMGYH) and 792–816 (FKCNMCGEKCDGPVGLFVHMARNAH).

It belongs to the hunchback C2H2-type zinc-finger protein family.

Its subcellular location is the nucleus. In terms of biological role, gap class segmentation protein that controls development of head structures. The protein is Protein hunchback (hb) of Musca domestica (House fly).